The primary structure comprises 543 residues: Carboxypeptidase Y homolog A (543 aa).

Residues 1-17 form the signal peptide; the sequence is MKFLTTGLLATAALAAA. Positions 18-124 are excised as a propeptide; the sequence is QEQHVLQAED…KLHNYDLRVK (107 aa). Cystine bridges form between C179–C419, C313–C327, C337–C360, C344–C353, and C382–C389. N210 carries N-linked (GlcNAc...) asparagine glycosylation. S266 is an active-site residue. Residue D458 is part of the active site. N509 carries N-linked (GlcNAc...) asparagine glycosylation. H520 is an active-site residue.

It belongs to the peptidase S10 family.

It localises to the vacuole. The catalysed reaction is Release of a C-terminal amino acid with broad specificity.. Vacuolar carboxypeptidase involved in degradation of small peptides. Digests preferentially peptides containing an aliphatic or hydrophobic residue in P1' position, as well as methionine, leucine or phenylalanine in P1 position of ester substrate. The polypeptide is Carboxypeptidase Y homolog A (cpyA) (Trichophyton verrucosum (strain HKI 0517)).